Reading from the N-terminus, the 234-residue chain is Glucosamine-6-phosphate deaminase (234 aa).

Asp62 acts as the Proton acceptor; for enolization step in catalysis. Catalysis depends on Asn128, which acts as the For ring-opening step. His130 acts as the Proton acceptor; for ring-opening step in catalysis. Residue Glu135 is the For ring-opening step of the active site.

Belongs to the glucosamine/galactosamine-6-phosphate isomerase family. NagB subfamily.

The enzyme catalyses alpha-D-glucosamine 6-phosphate + H2O = beta-D-fructose 6-phosphate + NH4(+). It functions in the pathway amino-sugar metabolism; N-acetylneuraminate degradation; D-fructose 6-phosphate from N-acetylneuraminate: step 5/5. Catalyzes the reversible isomerization-deamination of glucosamine 6-phosphate (GlcN6P) to form fructose 6-phosphate (Fru6P) and ammonium ion. The sequence is that of Glucosamine-6-phosphate deaminase from Streptococcus equi subsp. zooepidemicus (strain MGCS10565).